We begin with the raw amino-acid sequence, 448 residues long: MREIVHLQTGQCGNQIGAKFWEVVSDEHGIATDGQYKGTSDLQLERISVYYNEVAGNKYVPRAVLIDLEPGTMDSVRSGPFGSLFRPDNFVFGQSGAGNNWAKGHYTEGAELVDSVLDVVRKEAEGCDCLQGFQITHSLGGGTGAGMGTLLISKIREEFPDRMMATFSVVPSPKVSDTVVEPYNATLSVHQLVENSDETFCIDNEALYDICFRTLKLQTPTYGDLNHLVSIVMSGITTCLRFPGQLNSDLRKLAVNMVPFPRLHFFMVGFAPLTARGSQQYRAVTVPELTSQMFDAKNMMAASDPRHGRYLTVAAYFRGKVSMKEVEENMLSVQSKNSNYFVEWIPNNVQTAHCDIAPRGLKMSVTFIGNSTAIQDLFKRIADQFTAMFRRKAFLHWYTGEGMDEMEFTEAESNMQDLVAEYQQYQEAHVDEDEVDEEVYEDEAPPEE.

GTP is bound by residues Gln-11, Glu-69, Ser-138, Gly-142, Thr-143, Gly-144, Asn-204, and Asn-226. Residue Glu-69 participates in Mg(2+) binding.

Belongs to the tubulin family. Dimer of alpha and beta chains. A typical microtubule is a hollow water-filled tube with an outer diameter of 25 nm and an inner diameter of 15 nM. Alpha-beta heterodimers associate head-to-tail to form protofilaments running lengthwise along the microtubule wall with the beta-tubulin subunit facing the microtubule plus end conferring a structural polarity. Microtubules usually have 13 protofilaments but different protofilament numbers can be found in some organisms and specialized cells. Requires Mg(2+) as cofactor.

It localises to the cytoplasm. It is found in the cytoskeleton. Its function is as follows. Tubulin is the major constituent of microtubules, a cylinder consisting of laterally associated linear protofilaments composed of alpha- and beta-tubulin heterodimers. Microtubules grow by the addition of GTP-tubulin dimers to the microtubule end, where a stabilizing cap forms. Below the cap, tubulin dimers are in GDP-bound state, owing to GTPase activity of alpha-tubulin. This chain is Tubulin beta chain (TUB1), found in Melampsora lini (Rust fungus).